The primary structure comprises 200 residues: Holliday junction branch migration complex subunit RuvA (200 aa).

The segment at M1 to P63 is domain I. The interval D64–P142 is domain II. The tract at residues P142–G146 is flexible linker. Positions G147–R200 are domain III.

The protein belongs to the RuvA family. Homotetramer. Forms an RuvA(8)-RuvB(12)-Holliday junction (HJ) complex. HJ DNA is sandwiched between 2 RuvA tetramers; dsDNA enters through RuvA and exits via RuvB. An RuvB hexamer assembles on each DNA strand where it exits the tetramer. Each RuvB hexamer is contacted by two RuvA subunits (via domain III) on 2 adjacent RuvB subunits; this complex drives branch migration. In the full resolvosome a probable DNA-RuvA(4)-RuvB(12)-RuvC(2) complex forms which resolves the HJ.

Its subcellular location is the cytoplasm. The RuvA-RuvB-RuvC complex processes Holliday junction (HJ) DNA during genetic recombination and DNA repair, while the RuvA-RuvB complex plays an important role in the rescue of blocked DNA replication forks via replication fork reversal (RFR). RuvA specifically binds to HJ cruciform DNA, conferring on it an open structure. The RuvB hexamer acts as an ATP-dependent pump, pulling dsDNA into and through the RuvAB complex. HJ branch migration allows RuvC to scan DNA until it finds its consensus sequence, where it cleaves and resolves the cruciform DNA. The protein is Holliday junction branch migration complex subunit RuvA of Rhodococcus opacus (strain B4).